We begin with the raw amino-acid sequence, 202 residues long: Endothelin-1 (202 aa).

Residues 1–25 form the signal peptide; sequence MDYFPMIFALLFVAFQGAPEAAVLG. The propeptide occupies 26–50; it reads TELSAGAEDGGEKPAPATPWRPRRS. Cystine bridges form between Cys-53-Cys-67 and Cys-55-Cys-63. The propeptide occupies 74 to 202; sequence VNTPEHVVPY…DKKVIYNRAH (129 aa). Residues 110 to 124 are endothelin-like; that stretch reads CQCASQTDKKCWNFC.

This sequence belongs to the endothelin/sarafotoxin family.

Its subcellular location is the secreted. Its function is as follows. Endothelins are endothelium-derived vasoconstrictor peptides. Probable ligand for G-protein coupled receptors EDNRA and EDNRB which activates PTK2B, BCAR1, BCAR3 and, GTPases RAP1 and RHOA cascade in glomerular mesangial cells. Also binds the DEAR/FBXW7-AS1 receptor. Promotes mesenteric arterial wall remodeling via activation of ROCK signaling and subsequent colocalization of NFATC3 with F-actin filaments. NFATC3 then translocates to the nucleus where it subsequently promotes the transcription of the smooth muscle hypertrophy and differentiation marker ACTA2. The sequence is that of Endothelin-1 (EDN1) from Bos taurus (Bovine).